A 93-amino-acid chain; its full sequence is Small ribosomal subunit protein uS19 (93 aa).

The protein belongs to the universal ribosomal protein uS19 family.

Protein S19 forms a complex with S13 that binds strongly to the 16S ribosomal RNA. The sequence is that of Small ribosomal subunit protein uS19 from Campylobacter concisus (strain 13826).